Here is a 205-residue protein sequence, read N- to C-terminus: MSDQLFERTMAFAGILQAVAQVQYIARHGDSDKEALAASLQSVLVTNPESTSDVYADKFALRKGYELIVSQLGDAKQKDVEVTRYLVGILALERKLTRSSNAMGMLSERINQIHRQLSHFEITDEQVIANFAGIYSDIISELGPKLQISGNPEFLKRTQTQQKIRALLLSAMRSAVLWRQLGGKRRHLVFSRKTIVDTAMKSLTL.

This sequence belongs to the HflD family.

The protein localises to the cytoplasm. It localises to the cell inner membrane. In Shewanella pealeana (strain ATCC 700345 / ANG-SQ1), this protein is High frequency lysogenization protein HflD homolog.